A 419-amino-acid chain; its full sequence is UDP-N-acetylglucosamine 1-carboxyvinyltransferase 2 (419 aa).

22 to 23 (KN) provides a ligand contact to phosphoenolpyruvate. Residue arginine 92 participates in UDP-N-acetyl-alpha-D-glucosamine binding. Residue cysteine 116 is the Proton donor of the active site. Residue cysteine 116 is modified to 2-(S-cysteinyl)pyruvic acid O-phosphothioketal. UDP-N-acetyl-alpha-D-glucosamine contacts are provided by residues 121 to 125 (RPIDL), aspartate 306, and isoleucine 328.

The protein belongs to the EPSP synthase family. MurA subfamily.

It localises to the cytoplasm. It catalyses the reaction phosphoenolpyruvate + UDP-N-acetyl-alpha-D-glucosamine = UDP-N-acetyl-3-O-(1-carboxyvinyl)-alpha-D-glucosamine + phosphate. It participates in cell wall biogenesis; peptidoglycan biosynthesis. In terms of biological role, cell wall formation. Adds enolpyruvyl to UDP-N-acetylglucosamine. The polypeptide is UDP-N-acetylglucosamine 1-carboxyvinyltransferase 2 (Streptococcus pyogenes serotype M18 (strain MGAS8232)).